A 393-amino-acid polypeptide reads, in one-letter code: uncharacterized protein (393 aa).

Residues 345–393 (PNKWATDDAARREMERTRKARYRAKNRAVADPEDSPPGKRLRRGPKSST) form a disordered region. Positions 349–361 (ATDDAARREMERT) are enriched in basic and acidic residues. The span at 383–393 (KRLRRGPKSST) shows a compositional bias: basic residues.

This is an uncharacterized protein from Ictalurid herpesvirus 1 (strain Auburn) (IcHV-1).